A 354-amino-acid polypeptide reads, in one-letter code: Chorismate synthase (354 aa).

Residue arginine 48 coordinates NADP(+). Residues 125–127, alanine 280, 295–299, and arginine 321 contribute to the FMN site; these read RAS and KPIPS.

It belongs to the chorismate synthase family. In terms of assembly, homotetramer. Requires FMNH2 as cofactor.

It carries out the reaction 5-O-(1-carboxyvinyl)-3-phosphoshikimate = chorismate + phosphate. It participates in metabolic intermediate biosynthesis; chorismate biosynthesis; chorismate from D-erythrose 4-phosphate and phosphoenolpyruvate: step 7/7. Catalyzes the anti-1,4-elimination of the C-3 phosphate and the C-6 proR hydrogen from 5-enolpyruvylshikimate-3-phosphate (EPSP) to yield chorismate, which is the branch point compound that serves as the starting substrate for the three terminal pathways of aromatic amino acid biosynthesis. This reaction introduces a second double bond into the aromatic ring system. This Syntrophus aciditrophicus (strain SB) protein is Chorismate synthase.